The following is a 612-amino-acid chain: Chaperone protein DnaK (612 aa).

The residue at position 174 (T174) is a Phosphothreonine; by autocatalysis. Residues 579–612 (GSAGTGAGSQAGSAAGSGDGQSMDAEFKVKDEDK) are disordered. The span at 581 to 597 (AGTGAGSQAGSAAGSGD) shows a compositional bias: gly residues. Over residues 603 to 612 (AEFKVKDEDK) the composition is skewed to basic and acidic residues.

This sequence belongs to the heat shock protein 70 family.

In terms of biological role, acts as a chaperone. This chain is Chaperone protein DnaK, found in Symbiobacterium thermophilum (strain DSM 24528 / JCM 14929 / IAM 14863 / T).